The following is a 304-amino-acid chain: Glycine--tRNA ligase alpha subunit (304 aa).

This sequence belongs to the class-II aminoacyl-tRNA synthetase family. In terms of assembly, tetramer of two alpha and two beta subunits.

It is found in the cytoplasm. The catalysed reaction is tRNA(Gly) + glycine + ATP = glycyl-tRNA(Gly) + AMP + diphosphate. This Pectobacterium carotovorum subsp. carotovorum (strain PC1) protein is Glycine--tRNA ligase alpha subunit.